The chain runs to 1358 residues: DNA-directed RNA polymerase subunit beta (1358 aa).

This sequence belongs to the RNA polymerase beta chain family. The RNAP catalytic core consists of 2 alpha, 1 beta, 1 beta' and 1 omega subunit. When a sigma factor is associated with the core the holoenzyme is formed, which can initiate transcription.

It carries out the reaction RNA(n) + a ribonucleoside 5'-triphosphate = RNA(n+1) + diphosphate. Its function is as follows. DNA-dependent RNA polymerase catalyzes the transcription of DNA into RNA using the four ribonucleoside triphosphates as substrates. In Neorickettsia sennetsu (strain ATCC VR-367 / Miyayama) (Ehrlichia sennetsu), this protein is DNA-directed RNA polymerase subunit beta.